The primary structure comprises 329 residues: Apolipoprotein E (329 aa).

The N-terminal stretch at 1-18 is a signal peptide; sequence MKVLWAALVVALLAGCWA. Tandem repeats lie at residues 92-113, 114-135, 136-157, 158-179, 180-201, 202-223, 224-245, and 246-267. The interval 92–267 is 8 X 22 AA approximate tandem repeats; it reads TLMEETMKEI…HLDEVREQME (176 aa). Methionine 155 is subject to Methionine sulfoxide. Phosphoserine is present on serine 159. The interval 170–180 is LDL and other lipoprotein receptors binding; it reads HMRKLRKRVLR. Residue 174–177 participates in heparin binding; the sequence is LRKR. The interval 222-302 is lipid-binding and lipoprotein association; that stretch reads HAKVDALATQ…GWFEPLVEDM (81 aa). 241-248 serves as a coordination point for heparin; that stretch reads GQQLRGRL. Residues 278–329 form a homooligomerization region; it reads NQMRQQAEAFQARLKGWFEPLVEDMQRQWAVLVEKVQAAVGTSPTTPPVETK. The specificity for association with VLDL stretch occupies residues 290–302; that stretch reads RLKGWFEPLVEDM.

It belongs to the apolipoprotein A1/A4/E family. Homotetramer. May interact with ABCA1; functionally associated with ABCA1 in the biogenesis of HDLs. May interact with APP/A4 amyloid-beta peptide; the interaction is extremely stable in vitro but its physiological significance is unclear. May interact with MAPT. May interact with MAP2. In the cerebrospinal fluid, interacts with secreted SORL1. Interacts with PMEL; this allows the loading of PMEL luminal fragment on ILVs to induce fibril nucleation. Post-translationally, APOE exists as multiple glycosylated and sialylated glycoforms within cells and in plasma. The extent of glycosylation and sialylation are tissue and context specific. Glycated in plasma VLDL. In terms of processing, phosphorylated by FAM20C in the extracellular medium.

Its subcellular location is the secreted. The protein localises to the extracellular space. The protein resides in the extracellular matrix. It is found in the extracellular vesicle. It localises to the endosome. Its subcellular location is the multivesicular body. In terms of biological role, APOE is an apolipoprotein, a protein associating with lipid particles, that mainly functions in lipoprotein-mediated lipid transport between organs via the plasma and interstitial fluids. APOE is a core component of plasma lipoproteins and is involved in their production, conversion and clearance. Apolipoproteins are amphipathic molecules that interact both with lipids of the lipoprotein particle core and the aqueous environment of the plasma. As such, APOE associates with chylomicrons, chylomicron remnants, very low density lipoproteins (VLDL) and intermediate density lipoproteins (IDL) but shows a preferential binding to high-density lipoproteins (HDL). It also binds a wide range of cellular receptors including the LDL receptor/LDLR, the LDL receptor-related proteins LRP1, LRP2 and LRP8 and the very low-density lipoprotein receptor/VLDLR that mediate the cellular uptake of the APOE-containing lipoprotein particles. Finally, APOE also has a heparin-binding activity and binds heparan-sulfate proteoglycans on the surface of cells, a property that supports the capture and the receptor-mediated uptake of APOE-containing lipoproteins by cells. A main function of APOE is to mediate lipoprotein clearance through the uptake of chylomicrons, VLDLs, and HDLs by hepatocytes. APOE is also involved in the biosynthesis by the liver of VLDLs as well as their uptake by peripheral tissues ensuring the delivery of triglycerides and energy storage in muscle, heart and adipose tissues. By participating in the lipoprotein-mediated distribution of lipids among tissues, APOE plays a critical role in plasma and tissues lipid homeostasis. APOE is also involved in two steps of reverse cholesterol transport, the HDLs-mediated transport of cholesterol from peripheral tissues to the liver, and thereby plays an important role in cholesterol homeostasis. First, it is functionally associated with ABCA1 in the biogenesis of HDLs in tissues. Second, it is enriched in circulating HDLs and mediates their uptake by hepatocytes. APOE also plays an important role in lipid transport in the central nervous system, regulating neuron survival and sprouting. In Eumetopias jubatus (Steller sea lion), this protein is Apolipoprotein E (APOE).